Here is a 278-residue protein sequence, read N- to C-terminus: Hydroxyethylthiazole kinase (278 aa).

Residue Met48 coordinates substrate. ATP-binding residues include Arg124 and Thr175. Gly202 lines the substrate pocket.

This sequence belongs to the Thz kinase family. Mg(2+) is required as a cofactor.

The enzyme catalyses 5-(2-hydroxyethyl)-4-methylthiazole + ATP = 4-methyl-5-(2-phosphooxyethyl)-thiazole + ADP + H(+). It participates in cofactor biosynthesis; thiamine diphosphate biosynthesis; 4-methyl-5-(2-phosphoethyl)-thiazole from 5-(2-hydroxyethyl)-4-methylthiazole: step 1/1. Catalyzes the phosphorylation of the hydroxyl group of 4-methyl-5-beta-hydroxyethylthiazole (THZ). The sequence is that of Hydroxyethylthiazole kinase from Clostridium botulinum (strain Eklund 17B / Type B).